The following is a 464-amino-acid chain: tRNA modification GTPase MnmE (464 aa).

(6S)-5-formyl-5,6,7,8-tetrahydrofolate-binding residues include Arg25, Glu87, and Lys130. The TrmE-type G domain occupies 226–386 (GLSVVLAGQP…LRAELLRIAG (161 aa)). Residue Asn236 coordinates K(+). GTP-binding positions include 236-241 (NVGKSS), 255-261 (TPIAGTT), and 280-283 (DTAG). Ser240 is a Mg(2+) binding site. K(+) is bound by residues Thr255, Ile257, and Thr260. A Mg(2+)-binding site is contributed by Thr261. Lys464 contacts (6S)-5-formyl-5,6,7,8-tetrahydrofolate.

This sequence belongs to the TRAFAC class TrmE-Era-EngA-EngB-Septin-like GTPase superfamily. TrmE GTPase family. In terms of assembly, homodimer. Heterotetramer of two MnmE and two MnmG subunits. The cofactor is K(+).

It localises to the cytoplasm. Functionally, exhibits a very high intrinsic GTPase hydrolysis rate. Involved in the addition of a carboxymethylaminomethyl (cmnm) group at the wobble position (U34) of certain tRNAs, forming tRNA-cmnm(5)s(2)U34. In Burkholderia ambifaria (strain MC40-6), this protein is tRNA modification GTPase MnmE.